The sequence spans 388 residues: S-adenosylmethionine synthase (388 aa).

ATP is bound at residue His-17. Asp-19 lines the Mg(2+) pocket. K(+) is bound at residue Glu-45. Glu-58 and Gln-106 together coordinate L-methionine. The segment at 106–116 (QSAHIAQGVDK) is flexible loop. ATP-binding positions include 166 to 168 (DAK), Asp-241, 247 to 248 (RK), Ala-264, and Lys-268. Position 241 (Asp-241) interacts with L-methionine. Lys-272 contacts L-methionine.

This sequence belongs to the AdoMet synthase family. Homotetramer; dimer of dimers. It depends on Mg(2+) as a cofactor. The cofactor is K(+).

It is found in the cytoplasm. The catalysed reaction is L-methionine + ATP + H2O = S-adenosyl-L-methionine + phosphate + diphosphate. Its pathway is amino-acid biosynthesis; S-adenosyl-L-methionine biosynthesis; S-adenosyl-L-methionine from L-methionine: step 1/1. In terms of biological role, catalyzes the formation of S-adenosylmethionine (AdoMet) from methionine and ATP. The overall synthetic reaction is composed of two sequential steps, AdoMet formation and the subsequent tripolyphosphate hydrolysis which occurs prior to release of AdoMet from the enzyme. The chain is S-adenosylmethionine synthase from Cereibacter sphaeroides (strain ATCC 17023 / DSM 158 / JCM 6121 / CCUG 31486 / LMG 2827 / NBRC 12203 / NCIMB 8253 / ATH 2.4.1.) (Rhodobacter sphaeroides).